The sequence spans 319 residues: MLDKHGRKINYLRVSVTDRCNLRCVYCMPPEGIVKKEHDNIMRYEEIFKVVKSASLLGVNKIRFTGGEPLILKDIDKLIYNTSKINSIKDIAMTTNAILLEDMVEELKKDGLKRVNISLDSLKEDRFKSITRGGDINKVFKSIEKSLSIGMKPIKINTVIMKGINDDEIDDFMNLTKKYPISVRFIELMPIGEGRKLYEDSYISSEEIISKHSDLIPVETDKSSTALLYKFKESKENIGFISPMSCKFCSGCNRVRLTSEGTLKPCLHSEKEVDLKNYVDSSQALLSKINETIYNKPLEHHMIEEKESKSKKMMYQIGG.

The Radical SAM core domain maps to 4–219 (KHGRKINYLR…SKHSDLIPVE (216 aa)). A GTP-binding site is contributed by arginine 13. [4Fe-4S] cluster contacts are provided by cysteine 20 and cysteine 24. Tyrosine 26 lines the S-adenosyl-L-methionine pocket. Cysteine 27 lines the [4Fe-4S] cluster pocket. Residue arginine 63 coordinates GTP. S-adenosyl-L-methionine is bound at residue glycine 67. Residue threonine 94 coordinates GTP. Residue serine 118 participates in S-adenosyl-L-methionine binding. Residue lysine 155 coordinates GTP. Residue methionine 189 participates in S-adenosyl-L-methionine binding. [4Fe-4S] cluster-binding residues include cysteine 249 and cysteine 252. 254-256 (RVR) is a GTP binding site. Residue cysteine 266 participates in [4Fe-4S] cluster binding.

The protein belongs to the radical SAM superfamily. MoaA family. In terms of assembly, monomer and homodimer. The cofactor is [4Fe-4S] cluster.

It catalyses the reaction GTP + AH2 + S-adenosyl-L-methionine = (8S)-3',8-cyclo-7,8-dihydroguanosine 5'-triphosphate + 5'-deoxyadenosine + L-methionine + A + H(+). The protein operates within cofactor biosynthesis; molybdopterin biosynthesis. Its function is as follows. Catalyzes the cyclization of GTP to (8S)-3',8-cyclo-7,8-dihydroguanosine 5'-triphosphate. The sequence is that of GTP 3',8-cyclase from Clostridium botulinum (strain Okra / Type B1).